Consider the following 141-residue polypeptide: Small ribosomal subunit protein uS19 (141 aa).

Belongs to the universal ribosomal protein uS19 family.

Its function is as follows. Protein S19 forms a complex with S13 that binds strongly to the 16S ribosomal RNA. The sequence is that of Small ribosomal subunit protein uS19 from Halorubrum lacusprofundi (strain ATCC 49239 / DSM 5036 / JCM 8891 / ACAM 34).